The following is a 397-amino-acid chain: Probable sugar efflux transporter (397 aa).

12 helical membrane passes run 15–35 (VVTL…PVGL), 51–71 (GIML…FMLL), 81–101 (LICL…AWSF), 103–123 (VLVI…SITA), 136–156 (AQAL…GLPV), 170–190 (FLAI…LLPL), 209–229 (PALM…YTAY), 246–266 (FATV…VIFG), 273–293 (ASVL…LLMP), 301–321 (LAIL…GMQV), 333–353 (VAMS…ALVG), and 364–384 (DIGY…VIIF).

Belongs to the major facilitator superfamily. SotB (TC 2.A.1.2) family.

The protein localises to the cell inner membrane. Functionally, involved in the efflux of sugars. The physiological role may be the reduction of the intracellular concentration of toxic sugars or sugar metabolites. The polypeptide is Probable sugar efflux transporter (Escherichia fergusonii (strain ATCC 35469 / DSM 13698 / CCUG 18766 / IAM 14443 / JCM 21226 / LMG 7866 / NBRC 102419 / NCTC 12128 / CDC 0568-73)).